The sequence spans 231 residues: Ribonuclease 3 (231 aa).

An RNase III domain is found at 5–134 (QKKLKNDYGL…FLGALFIDQG (130 aa)). Mg(2+) is bound at residue Glu47. Asp51 is an active-site residue. Mg(2+)-binding residues include Asn120 and Glu123. Glu123 is a catalytic residue. Residues 160 to 229 (DYKTELQEVL…AENAIKGQNH (70 aa)) form the DRBM domain.

The protein belongs to the ribonuclease III family. As to quaternary structure, homodimer. Mg(2+) is required as a cofactor.

Its subcellular location is the cytoplasm. The catalysed reaction is Endonucleolytic cleavage to 5'-phosphomonoester.. Functionally, digests double-stranded RNA. Involved in the processing of primary rRNA transcript to yield the immediate precursors to the large and small rRNAs (23S and 16S). Processes some mRNAs, and tRNAs when they are encoded in the rRNA operon. Processes pre-crRNA and tracrRNA of type II CRISPR loci if present in the organism. This chain is Ribonuclease 3, found in Lactococcus lactis subsp. cremoris (strain MG1363).